A 440-amino-acid polypeptide reads, in one-letter code: Peroxisome proliferator-activated receptor delta (440 aa).

The tract at residues 1 to 53 (MEQPQEETPEAREEEKEEVAMGDGAPELNGGPEHTLPSSSCADLSQNSSPSSL) is disordered. A compositionally biased stretch (polar residues) spans 36–53 (LPSSSCADLSQNSSPSSL). Positions 70-144 (NMECRVCGDK…LGMSHNAIRF (75 aa)) form a DNA-binding region, nuclear receptor. NR C4-type zinc fingers lie at residues 73 to 93 (CRVC…CEGC) and 110 to 132 (CDRI…FQKC). One can recognise an NR LBD domain in the interval 210-438 (FVIHDIETLW…HPLLQEIYKD (229 aa)).

It belongs to the nuclear hormone receptor family. NR1 subfamily. As to quaternary structure, heterodimer with the retinoid X receptor. Interacts (via domain NR LBD) with CRY1 and CRY2 in a ligand-dependent manner. Post-translationally, 'Lys-48'-linked polyubiquitinated; leading to proteasomal degradation. Deubiquitinated and stabilized by OTUD3. Heart, adrenal and intestine.

Its subcellular location is the nucleus. In terms of biological role, ligand-activated transcription factor key mediator of energy metabolism in adipose tissues. Receptor that binds peroxisome proliferators such as hypolipidemic drugs and fatty acids. Has a preference for poly-unsaturated fatty acids, such as gamma-linoleic acid and eicosapentanoic acid. Once activated by a ligand, the receptor binds to promoter elements of target genes. Regulates the peroxisomal beta-oxidation pathway of fatty acids. Functions as transcription activator for the acyl-CoA oxidase gene. Decreases expression of NPC1L1 once activated by a ligand. The sequence is that of Peroxisome proliferator-activated receptor delta (Ppard) from Mus musculus (Mouse).